Reading from the N-terminus, the 720-residue chain is Probable GTPase-activating protein GYL1 (720 aa).

N-acetylmethionine is present on Met-1. The segment covering 1–52 has biased composition (basic and acidic residues); it reads MNSNEDIHEERIEVPRTPHQTQPEKDSDRIALRDEISVPEGDEKAYSDEKVE. The interval 1–132 is disordered; the sequence is MNSNEDIHEE…TSPPLPPRAD (132 aa). The residue at position 17 (Thr-17) is a Phosphothreonine. Position 37 is a phosphoserine (Ser-37). Residues 54 to 66 show a composition bias toward polar residues; sequence ATTNASSNFGSNE. A Phosphoserine modification is found at Ser-73. Residues 95-108 show a composition bias toward polar residues; that stretch reads SKTILPSDDLSQQL. Residues 111–120 are compositionally biased toward basic and acidic residues; sequence EESKVEEALK. A Phosphoserine modification is found at Ser-139. Disordered regions lie at residues 144–164 and 179–210; these read SLPP…RPQL and APHG…PRRI. Over residues 184–196 the composition is skewed to polar residues; sequence ATPSKSPTSAVGN. The Rab-GAP TBC domain occupies 297–477; the sequence is GIPAAYRLVV…RIGDMVFLEG (181 aa). A Glycyl lysine isopeptide (Lys-Gly) (interchain with G-Cter in SUMO) cross-link involves residue Lys-498. A coiled-coil region spans residues 572–696; it reads QYKSITEKNL…EIKTANKNGT (125 aa).

The protein belongs to the GYP5 family. In terms of assembly, interacts with GYP5 and RVS167. Is part of SEC4-containing complexes.

It is found in the cytoplasm. Its subcellular location is the bud. The protein localises to the bud neck. In terms of biological role, probable GTPase-activating protein which stimulates the GTP hydrolysis rate by GYP5 of YPT1 and SEC4. Involved in ER to Golgi trafficking and polarized exocytosis. This is Probable GTPase-activating protein GYL1 (GYL1) from Saccharomyces cerevisiae (strain ATCC 204508 / S288c) (Baker's yeast).